Consider the following 540-residue polypeptide: MAKDPGRVLIFDTTLRDGEQSPGASLNLEEKLAIAQQLARLGVDVIEAGFPFASPGDFAAVQRIAQQVGGENGPIICGLARASRGDIKACADAVAPAPKQRIHTFIATSDIHLEHKLRKSRKDVLGIVPEMVAYARSFVDDVEFSCEDAGRSDPEFLYEVIEAAISAGASTVNIPDTVGYTTPTEFGRLIEGINRNVPNIDEAVISVHGHNDLGLAVANFLEAVKSGARQLECTVNGIGERAGNAALEELVMAMHVRRRYFNPFFGRDEDSPTPLTAVRTEEITKTSRLVSNLTGMVVQPNKAIVGANAFAHESGIHQDGVLKNRLTYEIVDARTVGLTDNRISLGKLSGRSAVRARLEELGYDLSREDLDDAFARFKDLADRKREITDRDLESIVSVQVQQPDAKYQLKLVQVSCGSSLQPTATVTLADENGQEQTAASVGTGPVDAVCRSLNQLAGEPNELVEFSVKSVTEGIDAMGDVTIRLRRDGQLYSGHSAHTDVVVAAAEAFVNALNRLVAGTAGPTIHPQLDMAQLDSSPVH.

In terms of domain architecture, Pyruvate carboxyltransferase spans Val-8 to Thr-273. Asp-17, His-208, His-210, and Asn-244 together coordinate Mn(2+). The interval Gln-408 to His-540 is regulatory domain.

The protein belongs to the alpha-IPM synthase/homocitrate synthase family. LeuA type 1 subfamily. Homodimer. Mn(2+) serves as cofactor.

Its subcellular location is the cytoplasm. It carries out the reaction 3-methyl-2-oxobutanoate + acetyl-CoA + H2O = (2S)-2-isopropylmalate + CoA + H(+). It functions in the pathway amino-acid biosynthesis; L-leucine biosynthesis; L-leucine from 3-methyl-2-oxobutanoate: step 1/4. Functionally, catalyzes the condensation of the acetyl group of acetyl-CoA with 3-methyl-2-oxobutanoate (2-ketoisovalerate) to form 3-carboxy-3-hydroxy-4-methylpentanoate (2-isopropylmalate). In Synechococcus sp. (strain CC9311), this protein is 2-isopropylmalate synthase.